Reading from the N-terminus, the 352-residue chain is Peptide chain release factor 1 (352 aa).

An N5-methylglutamine modification is found at Gln230.

This sequence belongs to the prokaryotic/mitochondrial release factor family. Post-translationally, methylated by PrmC. Methylation increases the termination efficiency of RF1.

It is found in the cytoplasm. Functionally, peptide chain release factor 1 directs the termination of translation in response to the peptide chain termination codons UAG and UAA. This chain is Peptide chain release factor 1, found in Exiguobacterium sibiricum (strain DSM 17290 / CCUG 55495 / CIP 109462 / JCM 13490 / 255-15).